The chain runs to 277 residues: Large ribosomal subunit protein uL2c (277 aa).

The disordered stretch occupies residues 225–277 (MNPCDHPHGGGEGRSPIGRPKPVTPWGKPALGKKTRSPKRFSNKYIIRSRKMV). Residues 255-277 (LGKKTRSPKRFSNKYIIRSRKMV) are compositionally biased toward basic residues.

It belongs to the universal ribosomal protein uL2 family. In terms of assembly, part of the 50S ribosomal subunit.

Its subcellular location is the plastid. The protein resides in the chloroplast. The sequence is that of Large ribosomal subunit protein uL2c (rpl2) from Euglena gracilis.